A 136-amino-acid chain; its full sequence is General odorant-binding protein 57d (136 aa).

Residues 1–29 (MPEKMSLRLVPHLACIIFILEIQFRIADS) form the signal peptide. 3 disulfides stabilise this stretch: Cys33/Cys70, Cys66/Cys118, and Cys107/Cys127.

The protein belongs to the PBP/GOBP family.

In terms of biological role, present in the aqueous fluid surrounding olfactory sensory dendrites and are thought to aid in the capture and transport of hydrophobic odorants into and through this fluid. The polypeptide is General odorant-binding protein 57d (Drosophila melanogaster (Fruit fly)).